The primary structure comprises 302 residues: Quinolinate synthase (302 aa).

Iminosuccinate is bound by residues His24 and Ser41. Cys86 is a binding site for [4Fe-4S] cluster. Residues 112 to 114 (YVN) and Ser129 each bind iminosuccinate. [4Fe-4S] cluster is bound at residue Cys171. Iminosuccinate contacts are provided by residues 197–199 (HPE) and Thr214. Cys259 is a binding site for [4Fe-4S] cluster.

It belongs to the quinolinate synthase family. Type 2 subfamily. It depends on [4Fe-4S] cluster as a cofactor.

It is found in the cytoplasm. It carries out the reaction iminosuccinate + dihydroxyacetone phosphate = quinolinate + phosphate + 2 H2O + H(+). It functions in the pathway cofactor biosynthesis; NAD(+) biosynthesis; quinolinate from iminoaspartate: step 1/1. Catalyzes the condensation of iminoaspartate with dihydroxyacetone phosphate to form quinolinate. In Dehalococcoides mccartyi (strain ATCC BAA-2266 / KCTC 15142 / 195) (Dehalococcoides ethenogenes (strain 195)), this protein is Quinolinate synthase.